A 205-amino-acid polypeptide reads, in one-letter code: Protein phosphatase inhibitor 2 (205 aa).

Residues 1 to 44 (MAASTASHRPIKGILKNKTSTTSSVVASAEQPRRTVEEELSKKS) form a disordered region. Position 2 is an N-acetylalanine (A2). Positions 12–17 (KGILKN) are required for binding PPP1CC. Residues 19 to 29 (TSTTSSVVASA) show a composition bias toward low complexity. Residues 31 to 44 (QPRRTVEEELSKKS) are compositionally biased toward basic and acidic residues. Positions 43–55 (KSQKWDEMNILAT) are required for binding PPP1CC. Phosphoserine; by ATM is present on S44. Residue T73 is modified to Phosphothreonine; by GSK3. Residues S87 and S89 each carry the phosphoserine modification. Phosphothreonine is present on residues T96 and T116. The segment at 104 to 142 (LAAAEGSEPKFRTREQESSGEEDNDLSPEEREKKRQFEM) is disordered. Positions 110–120 (SEPKFRTREQE) are enriched in basic and acidic residues. S121, S122, and S130 each carry phosphoserine. Residues 121–130 (SSGEEDNDLS) are compositionally biased toward acidic residues. Over residues 131–142 (PEEREKKRQFEM) the composition is skewed to basic and acidic residues. The tract at residues 147–150 (HYNE) is required for binding PPP1CC catalytic center, displacing metal ions and inhibition of PPP1CC catalytic activity. The tract at residues 163–205 (KDLHDDDEDEEMSETADADSMNIEESNQGSTAGDHLQHKSQSS) is disordered. Residues 167 to 179 (DDDEDEEMSETAD) show a composition bias toward acidic residues.

The protein belongs to the protein phosphatase inhibitor 2 family. In terms of assembly, heterodimer with PP1. Phosphorylation on Ser-44 by ATM activates PP1 by dissociating the PP1-PPP1R2 complex. Phosphorylation on Thr-73 by GSK3 activates PP1 by dissociating the PP1-PPP1R2 complex. Central nervous system.

Inhibitor of protein-phosphatase 1. The sequence is that of Protein phosphatase inhibitor 2 (Ppp1r2) from Rattus norvegicus (Rat).